The chain runs to 657 residues: Protein FAM200B (657 aa).

The protein belongs to the FAM200 family.

The chain is Protein FAM200B from Homo sapiens (Human).